Reading from the N-terminus, the 376-residue chain is Cobalt-precorrin-5B C(1)-methyltransferase (376 aa).

A disordered region spans residues 353–376 (KGRTTSTPSHQPAPSSFGDRNRRT). The segment covering 355-366 (RTTSTPSHQPAP) has biased composition (polar residues).

The protein belongs to the CbiD family.

The catalysed reaction is Co-precorrin-5B + S-adenosyl-L-methionine = Co-precorrin-6A + S-adenosyl-L-homocysteine. The protein operates within cofactor biosynthesis; adenosylcobalamin biosynthesis; cob(II)yrinate a,c-diamide from sirohydrochlorin (anaerobic route): step 6/10. In terms of biological role, catalyzes the methylation of C-1 in cobalt-precorrin-5B to form cobalt-precorrin-6A. The protein is Cobalt-precorrin-5B C(1)-methyltransferase of Agrobacterium fabrum (strain C58 / ATCC 33970) (Agrobacterium tumefaciens (strain C58)).